A 209-amino-acid polypeptide reads, in one-letter code: FMN-dependent NADH:quinone oxidoreductase 2 (209 aa).

17–19 (SAS) is a binding site for FMN.

The protein belongs to the azoreductase type 1 family. In terms of assembly, homodimer. It depends on FMN as a cofactor.

The enzyme catalyses 2 a quinone + NADH + H(+) = 2 a 1,4-benzosemiquinone + NAD(+). The catalysed reaction is N,N-dimethyl-1,4-phenylenediamine + anthranilate + 2 NAD(+) = 2-(4-dimethylaminophenyl)diazenylbenzoate + 2 NADH + 2 H(+). Its function is as follows. Quinone reductase that provides resistance to thiol-specific stress caused by electrophilic quinones. Also exhibits azoreductase activity. Catalyzes the reductive cleavage of the azo bond in aromatic azo compounds to the corresponding amines. This Lactiplantibacillus plantarum (strain ATCC BAA-793 / NCIMB 8826 / WCFS1) (Lactobacillus plantarum) protein is FMN-dependent NADH:quinone oxidoreductase 2.